A 187-amino-acid polypeptide reads, in one-letter code: Isopentenyl-diphosphate Delta-isomerase (187 aa).

Mn(2+)-binding residues include H36, H43, and H80. A Nudix hydrolase domain is found at 41 to 178; the sequence is VRHRAFTALL…RQLRLCPWFE (138 aa). Residue E98 participates in Mg(2+) binding. Positions 127 and 129 each coordinate Mn(2+). Residue E129 is part of the active site.

The protein belongs to the IPP isomerase type 1 family. Mg(2+) serves as cofactor. It depends on Mn(2+) as a cofactor.

It is found in the cytoplasm. The catalysed reaction is isopentenyl diphosphate = dimethylallyl diphosphate. Its pathway is isoprenoid biosynthesis; dimethylallyl diphosphate biosynthesis; dimethylallyl diphosphate from isopentenyl diphosphate: step 1/1. In terms of biological role, catalyzes the 1,3-allylic rearrangement of the homoallylic substrate isopentenyl (IPP) to its highly electrophilic allylic isomer, dimethylallyl diphosphate (DMAPP). This Haloarcula marismortui (strain ATCC 43049 / DSM 3752 / JCM 8966 / VKM B-1809) (Halobacterium marismortui) protein is Isopentenyl-diphosphate Delta-isomerase.